The chain runs to 243 residues: UPF0246 protein SAK_2020 (243 aa).

It belongs to the UPF0246 family.

The protein is UPF0246 protein SAK_2020 of Streptococcus agalactiae serotype Ia (strain ATCC 27591 / A909 / CDC SS700).